A 175-amino-acid chain; its full sequence is Protein-export protein SecB (175 aa).

Residues 154 to 175 (QQGGNNNGSDSGIILPPGTTRQ) form a disordered region.

This sequence belongs to the SecB family. Homotetramer, a dimer of dimers. One homotetramer interacts with 1 SecA dimer.

The protein localises to the cytoplasm. In terms of biological role, one of the proteins required for the normal export of preproteins out of the cell cytoplasm. It is a molecular chaperone that binds to a subset of precursor proteins, maintaining them in a translocation-competent state. It also specifically binds to its receptor SecA. The polypeptide is Protein-export protein SecB (Bordetella petrii (strain ATCC BAA-461 / DSM 12804 / CCUG 43448)).